Here is a 293-residue protein sequence, read N- to C-terminus: 4-hydroxy-tetrahydrodipicolinate synthase (293 aa).

Position 45 (T45) interacts with pyruvate. The active-site Proton donor/acceptor is Y133. K161 (schiff-base intermediate with substrate) is an active-site residue. I204 contributes to the pyruvate binding site.

It belongs to the DapA family. Homotetramer; dimer of dimers.

It localises to the cytoplasm. The enzyme catalyses L-aspartate 4-semialdehyde + pyruvate = (2S,4S)-4-hydroxy-2,3,4,5-tetrahydrodipicolinate + H2O + H(+). Its pathway is amino-acid biosynthesis; L-lysine biosynthesis via DAP pathway; (S)-tetrahydrodipicolinate from L-aspartate: step 3/4. Functionally, catalyzes the condensation of (S)-aspartate-beta-semialdehyde [(S)-ASA] and pyruvate to 4-hydroxy-tetrahydrodipicolinate (HTPA). The polypeptide is 4-hydroxy-tetrahydrodipicolinate synthase (Edwardsiella ictaluri (strain 93-146)).